A 350-amino-acid chain; its full sequence is Probable dual-specificity RNA methyltransferase RlmN (350 aa).

The active-site Proton acceptor is the glutamate 93. The region spanning 99–327 (SSKRLTVCVS…VSVRYSRGVQ (229 aa)) is the Radical SAM core domain. A disulfide bond links cysteine 106 and cysteine 332. [4Fe-4S] cluster contacts are provided by cysteine 113, cysteine 117, and cysteine 120. S-adenosyl-L-methionine-binding positions include 160–161 (GE), serine 190, 213–215 (SLH), and asparagine 289. Cysteine 332 functions as the S-methylcysteine intermediate in the catalytic mechanism.

Belongs to the radical SAM superfamily. RlmN family. The cofactor is [4Fe-4S] cluster.

The protein localises to the cytoplasm. The catalysed reaction is adenosine(2503) in 23S rRNA + 2 reduced [2Fe-2S]-[ferredoxin] + 2 S-adenosyl-L-methionine = 2-methyladenosine(2503) in 23S rRNA + 5'-deoxyadenosine + L-methionine + 2 oxidized [2Fe-2S]-[ferredoxin] + S-adenosyl-L-homocysteine. The enzyme catalyses adenosine(37) in tRNA + 2 reduced [2Fe-2S]-[ferredoxin] + 2 S-adenosyl-L-methionine = 2-methyladenosine(37) in tRNA + 5'-deoxyadenosine + L-methionine + 2 oxidized [2Fe-2S]-[ferredoxin] + S-adenosyl-L-homocysteine. In terms of biological role, specifically methylates position 2 of adenine 2503 in 23S rRNA and position 2 of adenine 37 in tRNAs. The chain is Probable dual-specificity RNA methyltransferase RlmN from Synechocystis sp. (strain ATCC 27184 / PCC 6803 / Kazusa).